A 1079-amino-acid chain; its full sequence is Translation initiation factor IF-2 (1079 aa).

Basic and acidic residues-rich tracts occupy residues Val-52 to Asn-65, Arg-75 to Glu-90, and Ala-102 to Gln-134. Residues Val-52–Ala-488 form a disordered region. Residues Ala-150–Thr-184 are compositionally biased toward low complexity. A compositionally biased stretch (basic and acidic residues) spans Val-185 to Ala-194. Residues Ala-276–Gln-291 show a composition bias toward low complexity. Residues Gly-306–Gly-327 are compositionally biased toward basic and acidic residues. Low complexity-rich tracts occupy residues Glu-348–Pro-370 and Pro-380–Pro-398. Residues Pro-419–Gly-429 show a composition bias toward gly residues. Residues Pro-461 to Arg-471 show a composition bias toward basic and acidic residues. A compositionally biased stretch (basic residues) spans Pro-473 to Lys-482. The tr-type G domain maps to Thr-578–Glu-745. Positions Gly-587 to Thr-594 are G1. Gly-587–Thr-594 is a GTP binding site. A G2 region spans residues Gly-612–His-616. The tract at residues Asp-633–Gly-636 is G3. GTP is bound by residues Asp-633 to His-637 and Asn-687 to Asp-690. The interval Asn-687 to Asp-690 is G4. The G5 stretch occupies residues Ser-723–Lys-725.

The protein belongs to the TRAFAC class translation factor GTPase superfamily. Classic translation factor GTPase family. IF-2 subfamily.

The protein resides in the cytoplasm. In terms of biological role, one of the essential components for the initiation of protein synthesis. Protects formylmethionyl-tRNA from spontaneous hydrolysis and promotes its binding to the 30S ribosomal subunits. Also involved in the hydrolysis of GTP during the formation of the 70S ribosomal complex. This Nitratidesulfovibrio vulgaris (strain ATCC 29579 / DSM 644 / CCUG 34227 / NCIMB 8303 / VKM B-1760 / Hildenborough) (Desulfovibrio vulgaris) protein is Translation initiation factor IF-2.